A 294-amino-acid polypeptide reads, in one-letter code: Urease accessory protein UreD (294 aa).

Positions 1 to 22 (MSVEKPVAAGRQNSKATGRHKG) are disordered.

Belongs to the UreD family. UreD, UreF and UreG form a complex that acts as a GTP-hydrolysis-dependent molecular chaperone, activating the urease apoprotein by helping to assemble the nickel containing metallocenter of UreC. The UreE protein probably delivers the nickel.

The protein localises to the cytoplasm. Functionally, required for maturation of urease via the functional incorporation of the urease nickel metallocenter. This Alcanivorax borkumensis (strain ATCC 700651 / DSM 11573 / NCIMB 13689 / SK2) protein is Urease accessory protein UreD.